The primary structure comprises 102 residues: A-type ATP synthase subunit F (102 aa).

This sequence belongs to the V-ATPase F subunit family. Has multiple subunits with at least A(3), B(3), C, D, E, F, H, I and proteolipid K(x).

It is found in the cell membrane. Functionally, component of the A-type ATP synthase that produces ATP from ADP in the presence of a proton gradient across the membrane. The sequence is that of A-type ATP synthase subunit F from Thermococcus kodakarensis (strain ATCC BAA-918 / JCM 12380 / KOD1) (Pyrococcus kodakaraensis (strain KOD1)).